Reading from the N-terminus, the 89-residue chain is Small ribosomal subunit protein uS14 (89 aa).

This sequence belongs to the universal ribosomal protein uS14 family. As to quaternary structure, part of the 30S ribosomal subunit. Contacts proteins S3 and S10.

Binds 16S rRNA, required for the assembly of 30S particles and may also be responsible for determining the conformation of the 16S rRNA at the A site. This Cytophaga hutchinsonii (strain ATCC 33406 / DSM 1761 / CIP 103989 / NBRC 15051 / NCIMB 9469 / D465) protein is Small ribosomal subunit protein uS14.